A 259-amino-acid polypeptide reads, in one-letter code: Aliphatic sulfonates import ATP-binding protein SsuB 1 (259 aa).

Residues 15–229 enclose the ABC transporter domain; sequence VECRRITRRF…QASTPGFQAL (215 aa). 47 to 54 contributes to the ATP binding site; the sequence is GSSGSGKT.

The protein belongs to the ABC transporter superfamily. Aliphatic sulfonates importer (TC 3.A.1.17.2) family. In terms of assembly, the complex is composed of two ATP-binding proteins (SsuB), two transmembrane proteins (SsuC) and a solute-binding protein (SsuA).

The protein resides in the cell inner membrane. It carries out the reaction ATP + H2O + aliphatic sulfonate-[sulfonate-binding protein]Side 1 = ADP + phosphate + aliphatic sulfonateSide 2 + [sulfonate-binding protein]Side 1.. Its function is as follows. Part of the ABC transporter complex SsuABC involved in aliphatic sulfonates import. Responsible for energy coupling to the transport system. This is Aliphatic sulfonates import ATP-binding protein SsuB 1 from Pseudomonas fluorescens (strain ATCC BAA-477 / NRRL B-23932 / Pf-5).